The chain runs to 730 residues: Probable palmitoyltransferase AKR2 (730 aa).

6 ANK repeats span residues 32-62 (FVVETFIEAIKDDDLKVVKEVVESGAIDINK), 66-95 (DELPGLHWACIKNRFSIAKFLIRRGANVNQ), 100-129 (ERATALHWAARYGHVYIVDLLLKHGANPTL), 133-166 (QGLNILHFSVYSSNIMLVVYVLYFVVSNNNNVDI), 172-201 (NNRTPLLWAAYQGDFLTVELLLKFGATVAL), and 205-234 (RGFNALHCALVGGDQRAICDLILSGANFYE). The next 4 helical transmembrane spans lie at 283–303 (LMIFLSPFALMIYTYLISLIL), 309–328 (IALSLLVIVVTVNSLKKFVL), 344–364 (TPFFSGLFMSTFSFLLFIWVK), and 376–396 (AKDAQLLITSLFTFVLFLKLV). Residues 429 to 479 (NFCVETLERKPLRSKYSLFSGALVARFNHYCPWVYNDIGLKNHKLFMFFAF) enclose the DHHC domain. The active-site S-palmitoyl cysteine intermediate is cysteine 459. Transmembrane regions (helical) follow at residues 473–493 (LFMFFAFSVQYEMFLFMWLCL) and 530–550 (TFFLFIWISMNFVWLGGMLIV).

It belongs to the DHHC palmitoyltransferase family. AKR/ZDHHC17 subfamily.

The protein resides in the membrane. It catalyses the reaction L-cysteinyl-[protein] + hexadecanoyl-CoA = S-hexadecanoyl-L-cysteinyl-[protein] + CoA. The sequence is that of Probable palmitoyltransferase AKR2 (AKR2) from Saccharomyces uvarum (strain ATCC 76518 / CBS 7001 / CLIB 283 / NBRC 10550 / MCYC 623 / NCYC 2669 / NRRL Y-11845) (Yeast).